Reading from the N-terminus, the 95-residue chain is DNA-directed RNA polymerase subunit Rpo6 (95 aa).

It belongs to the archaeal Rpo6/eukaryotic RPB6 RNA polymerase subunit family. In terms of assembly, part of the 13-subunit RNA polymerase complex.

It localises to the cytoplasm. It catalyses the reaction RNA(n) + a ribonucleoside 5'-triphosphate = RNA(n+1) + diphosphate. Functionally, DNA-dependent RNA polymerase (RNAP) catalyzes the transcription of DNA into RNA using the four ribonucleoside triphosphates as substrates. In Saccharolobus solfataricus (strain ATCC 35092 / DSM 1617 / JCM 11322 / P2) (Sulfolobus solfataricus), this protein is DNA-directed RNA polymerase subunit Rpo6.